The following is a 495-amino-acid chain: Mesoderm induction early response protein 1 (495 aa).

2 disordered regions span residues 1 to 25 (MAEPSLRTASPGGSAASDDHEFEPS) and 76 to 131 (GSTV…PSFT). The segment covering 83 to 94 (GEEEEDEEDMDN) has biased composition (acidic residues). A compositionally biased stretch (polar residues) spans 120-130 (QSSNDDPTPSF). The 99-residue stretch at 171-269 (KEIMVGSMFQ…EALRRLRFNV (99 aa)) folds into the ELM2 domain. Positions 274-326 (EELSVWTEEECRNFEQGLKAYGKDFHLIQANKVRTRSVGECVAFYYMWKKSER) constitute an SANT domain. Disordered regions lie at residues 356–397 (DESE…NGVS) and 416–495 (HLNG…HGEV). Polar residues-rich tracts occupy residues 387–397 (TASNNTQNGVS) and 420–440 (PTISSSDPSSNETDTNGYNRE). Basic and acidic residues predominate over residues 462-476 (TNERPIKRQRMDSPG). A compositionally biased stretch (polar residues) spans 477-489 (KESTGSSEFSQEV).

The protein localises to the nucleus. Functionally, transcriptional repressor regulating the expression of a number of genes. Probably functions through recruitment of histone deacetylases involved in chromatin silencing. This Xenopus laevis (African clawed frog) protein is Mesoderm induction early response protein 1 (mier1).